Consider the following 351-residue polypeptide: Uroporphyrinogen decarboxylase (351 aa).

Substrate-binding positions include 25-29 (RQAGR), F43, D74, Y151, S206, and H325.

This sequence belongs to the uroporphyrinogen decarboxylase family. In terms of assembly, homodimer.

It is found in the cytoplasm. It carries out the reaction uroporphyrinogen III + 4 H(+) = coproporphyrinogen III + 4 CO2. It participates in porphyrin-containing compound metabolism; protoporphyrin-IX biosynthesis; coproporphyrinogen-III from 5-aminolevulinate: step 4/4. Its function is as follows. Catalyzes the decarboxylation of four acetate groups of uroporphyrinogen-III to yield coproporphyrinogen-III. In Chlorobaculum tepidum (strain ATCC 49652 / DSM 12025 / NBRC 103806 / TLS) (Chlorobium tepidum), this protein is Uroporphyrinogen decarboxylase.